The chain runs to 283 residues: 4-diphosphocytidyl-2-C-methyl-D-erythritol kinase (283 aa).

Residue lysine 10 is part of the active site. Position 99–109 (99–109 (PMGGGLGGGSS)) interacts with ATP. The active site involves aspartate 141.

It belongs to the GHMP kinase family. IspE subfamily. As to quaternary structure, homodimer.

The catalysed reaction is 4-CDP-2-C-methyl-D-erythritol + ATP = 4-CDP-2-C-methyl-D-erythritol 2-phosphate + ADP + H(+). Its pathway is isoprenoid biosynthesis; isopentenyl diphosphate biosynthesis via DXP pathway; isopentenyl diphosphate from 1-deoxy-D-xylulose 5-phosphate: step 3/6. Catalyzes the phosphorylation of the position 2 hydroxy group of 4-diphosphocytidyl-2C-methyl-D-erythritol. The sequence is that of 4-diphosphocytidyl-2-C-methyl-D-erythritol kinase from Escherichia coli O157:H7 (strain EC4115 / EHEC).